Reading from the N-terminus, the 343-residue chain is Uroporphyrinogen decarboxylase (343 aa).

Substrate is bound by residues arginine 23–arginine 27, aspartate 73, tyrosine 150, serine 205, and histidine 322.

It belongs to the uroporphyrinogen decarboxylase family. As to quaternary structure, homodimer.

Its subcellular location is the cytoplasm. The catalysed reaction is uroporphyrinogen III + 4 H(+) = coproporphyrinogen III + 4 CO2. It participates in porphyrin-containing compound metabolism; protoporphyrin-IX biosynthesis; coproporphyrinogen-III from 5-aminolevulinate: step 4/4. Functionally, catalyzes the decarboxylation of four acetate groups of uroporphyrinogen-III to yield coproporphyrinogen-III. The protein is Uroporphyrinogen decarboxylase of Cereibacter sphaeroides (strain ATCC 17029 / ATH 2.4.9) (Rhodobacter sphaeroides).